The primary structure comprises 363 residues: Adenosine kinase (363 aa).

Residues A185, I188, and A191 each coordinate Mg(2+). D318 is a catalytic residue.

This sequence belongs to the carbohydrate kinase PfkB family. Requires Mg(2+) as cofactor.

It carries out the reaction adenosine + ATP = AMP + ADP + H(+). It functions in the pathway purine metabolism; AMP biosynthesis via salvage pathway; AMP from adenosine: step 1/1. ATP-dependent phosphorylation of adenosine and other related nucleoside analogs to monophosphate derivatives. It is a key purine metabolic enzyme in the opportunistic parasitic protozoan toxoplasma gondii as it cannot synthesize purines de novo. The polypeptide is Adenosine kinase (AK) (Toxoplasma gondii).